The primary structure comprises 203 residues: GTP-binding protein yptV1 (203 aa).

GTP contacts are provided by residues 15 to 23, 33 to 40, 63 to 67, 121 to 124, and 151 to 153; these read GDSGVGKSC, YTESYIST, DTAGQ, NKSD, and SAK. Residues 37–45 carry the Effector region motif; the sequence is YISTIGVDF. The interval 173–203 is disordered; that stretch reads MASQPVPPKPGGPVVRPTEGKPINNKSSSCC. Residues Cys-202 and Cys-203 are each lipidated (S-geranylgeranyl cysteine).

It belongs to the small GTPase superfamily. Rab family.

Its subcellular location is the cell membrane. Protein transport. Probably involved in vesicular traffic. The sequence is that of GTP-binding protein yptV1 (YPTV1) from Volvox carteri (Green alga).